The following is a 160-amino-acid chain: Prostaglandin E synthase 3 (160 aa).

Positions Met-1–Thr-90 constitute a CS domain. At Lys-33 the chain carries N6-acetyllysine. Lys-35 participates in a covalent cross-link: Glycyl lysine isopeptide (Lys-Gly) (interchain with G-Cter in SUMO2). Ser-44 is modified (phosphoserine). Lys-65 participates in a covalent cross-link: Glycyl lysine isopeptide (Lys-Gly) (interchain with G-Cter in SUMO2). A phosphoserine mark is found at Ser-85, Ser-100, Ser-113, Ser-118, Ser-148, and Ser-151. The segment at Ser-124–Glu-160 is disordered. Over residues Gly-132 to Asp-153 the composition is skewed to acidic residues. The short motif at Pro-157–Glu-160 is the PXLE motif element.

It belongs to the p23/wos2 family. As to quaternary structure, probably forms a complex composed of chaperones HSP90 and HSP70, co-chaperones STIP1/HOP, CDC37, PPP5C, PTGES3/p23, TSC1 and client protein TSC2. Binds to the progesterone receptor. Interacts with TERT; the interaction, together with HSP90AA1, is required for correct assembly and stabilization of the telomerase holoenzyme complex. Interacts (via PXLE motif) with EGLN1/PHD2, recruiting EGLN1/PHD2 to the HSP90 pathway to facilitate HIF alpha proteins hydroxylation. Interacts with HSP90AA1, FLCN, FNIP1 and FNIP2. Post-translationally, proteolytically cleaved by caspase-7 (CASP7) in response to apoptosis, leading to its inactivation. As to expression, detected in testis and ovary, at lower levels in endometrium, myometrium, kidney and lung, and only faintly in spleen, heart and muscle (at protein level). Expressed at high levels in glandular and luminal epithelial cells of the endometrium, but also detected in stromal cells (at protein level).

It is found in the cytoplasm. It carries out the reaction prostaglandin H2 = prostaglandin E2. It participates in lipid metabolism; prostaglandin biosynthesis. In terms of biological role, cytosolic prostaglandin synthase that catalyzes the oxidoreduction of prostaglandin endoperoxide H2 (PGH2) to prostaglandin E2 (PGE2). Molecular chaperone that localizes to genomic response elements in a hormone-dependent manner and disrupts receptor-mediated transcriptional activation, by promoting disassembly of transcriptional regulatory complexes. Facilitates HIF alpha proteins hydroxylation via interaction with EGLN1/PHD2, leading to recruit EGLN1/PHD2 to the HSP90 pathway. In Bos taurus (Bovine), this protein is Prostaglandin E synthase 3 (PTGES3).